The following is a 534-amino-acid chain: CTP synthase (534 aa).

The interval 1 to 267 (MTKYIFVTGG…DQIVCDHLKL (267 aa)) is amidoligase domain. Residue serine 13 coordinates CTP. UTP is bound at residue serine 13. 14–19 (SIGKGI) lines the ATP pocket. Tyrosine 54 contributes to the L-glutamine binding site. Aspartate 71 lines the ATP pocket. Mg(2+) is bound by residues aspartate 71 and glutamate 141. Residues 148–150 (DIE), 188–193 (KTKPTQ), and lysine 224 contribute to the CTP site. UTP is bound by residues 188-193 (KTKPTQ) and lysine 224. 240 to 242 (RDV) is a binding site for ATP. Positions 292–534 (KIALVGKYVE…FVTAAIKNSN (243 aa)) constitute a Glutamine amidotransferase type-1 domain. Glycine 354 serves as a coordination point for L-glutamine. Cysteine 381 functions as the Nucleophile; for glutamine hydrolysis in the catalytic mechanism. L-glutamine contacts are provided by residues 382-385 (LGMQ), glutamate 405, and arginine 463. Residues histidine 508 and glutamate 510 contribute to the active site.

It belongs to the CTP synthase family. Homotetramer.

The catalysed reaction is UTP + L-glutamine + ATP + H2O = CTP + L-glutamate + ADP + phosphate + 2 H(+). The enzyme catalyses L-glutamine + H2O = L-glutamate + NH4(+). It catalyses the reaction UTP + NH4(+) + ATP = CTP + ADP + phosphate + 2 H(+). The protein operates within pyrimidine metabolism; CTP biosynthesis via de novo pathway; CTP from UDP: step 2/2. Its activity is regulated as follows. Allosterically activated by GTP, when glutamine is the substrate; GTP has no effect on the reaction when ammonia is the substrate. The allosteric effector GTP functions by stabilizing the protein conformation that binds the tetrahedral intermediate(s) formed during glutamine hydrolysis. Inhibited by the product CTP, via allosteric rather than competitive inhibition. In terms of biological role, catalyzes the ATP-dependent amination of UTP to CTP with either L-glutamine or ammonia as the source of nitrogen. Regulates intracellular CTP levels through interactions with the four ribonucleotide triphosphates. The polypeptide is CTP synthase (Streptococcus pyogenes serotype M4 (strain MGAS10750)).